Reading from the N-terminus, the 544-residue chain is Chaperonin GroEL (544 aa).

Residues 30 to 33 (TLGP), lysine 51, 87 to 91 (DGTTT), glycine 415, 479 to 481 (NAA), and aspartate 495 contribute to the ATP site.

The protein belongs to the chaperonin (HSP60) family. In terms of assembly, forms a cylinder of 14 subunits composed of two heptameric rings stacked back-to-back. Interacts with the co-chaperonin GroES.

Its subcellular location is the cytoplasm. The catalysed reaction is ATP + H2O + a folded polypeptide = ADP + phosphate + an unfolded polypeptide.. Together with its co-chaperonin GroES, plays an essential role in assisting protein folding. The GroEL-GroES system forms a nano-cage that allows encapsulation of the non-native substrate proteins and provides a physical environment optimized to promote and accelerate protein folding. This chain is Chaperonin GroEL, found in Francisella tularensis subsp. novicida (strain U112).